Here is a 353-residue protein sequence, read N- to C-terminus: Survival factor 2 (353 aa).

Belongs to the SVF1 family.

It is found in the cytoplasm. Its subcellular location is the nucleus. This is Survival factor 2 (svf2) from Schizosaccharomyces pombe (strain 972 / ATCC 24843) (Fission yeast).